The sequence spans 205 residues: Phospholipase D (205 aa).

Positions 1 to 22 are cleaved as a signal peptide; sequence MKSKNNKFIAVSISFILGIALG. One can recognise a PLD phosphodiesterase domain in the interval 142–169; it reads VPGIAHNKVIIIDKKKVITGSFNFTVSA. Catalysis depends on residues His147, Lys149, and Asp154.

This sequence belongs to the phospholipase D family. In terms of assembly, homodimer.

It is found in the secreted. The catalysed reaction is a 1,2-diacyl-sn-glycero-3-phosphocholine + H2O = a 1,2-diacyl-sn-glycero-3-phosphate + choline + H(+). Could be a virulence factor. The polypeptide is Phospholipase D (pld) (Rickettsia prowazekii (strain Madrid E)).